Consider the following 336-residue polypeptide: MPRRPSTGTQSDTPALHVVPSFYGVYLLQSEPKPSSFYIGSTPDPPRRLRQHNGDLKAGGAYRTKRAGFRPWRMLLVVYDFPSKVSALQFEHSFQHCHETRHIKQEERISKNKLSGRTLHHKVANVALLLRSSYFRHLPLKVLVFEEAVYNSFMNNKFVTCSHVDLLNTNFNEYFSVMEKDLDSTVDSWKTRHTNENEIWSMAKEAVILGSPRCALCLEPIEQVPETSSPISKRSDLQRYLQSESLPLVTMCYNPQCRDVFHLSCLGHRFTNSDGFQSLIPATVNRCCSCNAKLEWRTLAKIATKLRYYVLKDSLQLPSQVLENDDNYESQNVNDS.

The 84-residue stretch at 21-104 (SFYGVYLLQS…QHCHETRHIK (84 aa)) folds into the GIY-YIG domain. Residues 37 to 57 (FYIGSTPDPPRRLRQHNGDLK) are disordered. Residues 214–290 (CALCLEPIEQ…PATVNRCCSC (77 aa)) form an SLX1-type zinc finger.

The protein belongs to the SLX1 family. In terms of assembly, forms a heterodimer with SLX4. A divalent metal cation is required as a cofactor.

It localises to the nucleus. Functionally, catalytic subunit of the SLX1-SLX4 structure-specific endonuclease that resolves DNA secondary structures generated during DNA repair and recombination. Has endonuclease activity towards branched DNA substrates, introducing single-strand cuts in duplex DNA close to junctions with ss-DNA. The polypeptide is Structure-specific endonuclease subunit SLX1 (Scheffersomyces stipitis (strain ATCC 58785 / CBS 6054 / NBRC 10063 / NRRL Y-11545) (Yeast)).